Here is a 554-residue protein sequence, read N- to C-terminus: Phospho-2-dehydro-3-deoxyheptonate aldolase 1, chloroplastic (554 aa).

Residues 1 to 39 (MSLATSSSMAGGAAVVPRSATATTASAFVTMKRRATAVR) constitute a chloroplast transit peptide. The tract at residues 41-70 (VHAAEPSKNPPVGVPSAAKTSSPSVAAPEK) is disordered.

The protein belongs to the class-II DAHP synthase family.

The protein localises to the plastid. It is found in the chloroplast. It carries out the reaction D-erythrose 4-phosphate + phosphoenolpyruvate + H2O = 7-phospho-2-dehydro-3-deoxy-D-arabino-heptonate + phosphate. The protein operates within metabolic intermediate biosynthesis; chorismate biosynthesis; chorismate from D-erythrose 4-phosphate and phosphoenolpyruvate: step 1/7. The chain is Phospho-2-dehydro-3-deoxyheptonate aldolase 1, chloroplastic (DAHPS1) from Oryza sativa subsp. japonica (Rice).